Here is a 445-residue protein sequence, read N- to C-terminus: MSSDADAHKVGLIPVTLMVSGNIMGSGVFLLPANLASTGGIAIYGWLVTIIGALGLSMVYAKMSFLDPSPGGSYAYARRCFGPFLGYQTNVLYWLACWIGNIAMVVIGVGYLSYFFPILKDPLVLTITCVVVLWIFVLLNIVGPKMITRVQAVATVLALIPIVGIAVFGWFWFRGETYMAAWNVSGLGTFGAIQSTLNVTLWSFIGVESASVAAGVVKNPKRNVPIATIGGVLIAAVCYVLSTTAIMGMIPNAALRVSASPFGDAARMALGDTAGAIVSFCAAAGCLGSLGGWTLLAGQTAKAAADDGLFPPIFARVNKAGTPVAGLIIVGILMTIFQLSSISPNATKEFGLVSSVSVIFTLVPYLYTCAALLLLGHGHFGKARPAYLAVTTIAFLYCIWAVVGSGAKEVMWSFVTLMVITAMYALNYNRLHKNPYPLDAPISKD.

Topologically, residues 1 to 12 (MSSDADAHKVGL) are cytoplasmic. A helical membrane pass occupies residues 13–24 (IPVTLMVSGNIM). 3 residues coordinate L-arginine: I23, S26, and G27. Residues 25–27 (GSG) carry the Helix-breaking GSG motif TM1 motif. Residues 25-42 (GSGVFLLPANLASTGGIA) lie on the Periplasmic side of the membrane. The chain crosses the membrane as a helical span at residues 43–61 (IYGWLVTIIGALGLSMVYA). Residues 62 to 86 (KMSFLDPSPGGSYAYARRCFGPFLG) are Cytoplasmic-facing. A helical membrane pass occupies residues 87 to 112 (YQTNVLYWLACWIGNIAMVVIGVGYL). 3 residues coordinate L-arginine: A96, C97, and N101. At 113–124 (SYFFPILKDPLV) the chain is on the periplasmic side. The helical transmembrane segment at 125–142 (LTITCVVVLWIFVLLNIV) threads the bilayer. Residue G143 is a topological domain, cytoplasmic. The helical transmembrane segment at 144 to 171 (PKMITRVQAVATVLALIPIVGIAVFGWF) threads the bilayer. The Periplasmic portion of the chain corresponds to 172–194 (WFRGETYMAAWNVSGLGTFGAIQ). A helical membrane pass occupies residues 195–207 (STLNVTLWSFIGV). W202 and I205 together coordinate L-arginine. The short motif at 206-210 (GVESA) is the Helix-breaking GVESA motif TM6 element. Residues 208-226 (ESASVAAGVVKNPKRNVPI) lie on the Cytoplasmic side of the membrane. Residues 227 to 247 (ATIGGVLIAAVCYVLSTTAIM) form a helical membrane-spanning segment. Over 248–277 (GMIPNAALRVSASPFGDAARMALGDTAGAI) the chain is Periplasmic. The chain crosses the membrane as a helical span at residues 278–301 (VSFCAAAGCLGSLGGWTLLAGQTA). W293 is an L-arginine binding site. Topologically, residues 302 to 323 (KAAADDGLFPPIFARVNKAGTP) are cytoplasmic. A helical transmembrane segment spans residues 324-340 (VAGLIIVGILMTIFQLS). At 341–352 (SISPNATKEFGL) the chain is on the periplasmic side. A helical transmembrane segment spans residues 353–370 (VSSVSVIFTLVPYLYTCA). S357 contacts L-arginine. The Cytoplasmic portion of the chain corresponds to 371 to 388 (ALLLLGHGHFGKARPAYL). The helical transmembrane segment at 389–404 (AVTTIAFLYCIWAVVG) threads the bilayer. At 405 to 407 (SGA) the chain is on the periplasmic side. The helical transmembrane segment at 408–426 (KEVMWSFVTLMVITAMYAL) threads the bilayer. Residues 427-445 (NYNRLHKNPYPLDAPISKD) are Cytoplasmic-facing.

The protein belongs to the amino acid-polyamine-organocation (APC) superfamily. Basic amino acid/polyamine antiporter (APA) (TC 2.A.3.2) family. In terms of assembly, homodimer;each subunit has its own individual transport capacity.

Its subcellular location is the cell inner membrane. It carries out the reaction agmatine(in) + L-arginine(out) = agmatine(out) + L-arginine(in). In terms of biological role, major component of the acid-resistance (AR) system allowing enteric pathogens to survive the acidic environment in the stomach. Exchanges extracellular arginine for its intracellular decarboxylation product agmatine (Agm) thereby expelling intracellular protons. Probably undergoes several conformational states in order to translocate the substrate across the membrane; keeps the substrate accessible to only 1 side of the membrane at a time by opening and closing 3 membrane-internal gates. The chain is Arginine/agmatine antiporter (adiC) from Escherichia coli O157:H7.